The following is a 5641-amino-acid chain: Cyclochlorotine synthetase (5641 aa).

The disordered stretch occupies residues 95–124 (PENLNGHLIGSTNGHKKQWENDSADDKRGQ). Basic and acidic residues predominate over residues 111 to 124 (KQWENDSADDKRGQ). The interval 217–622 (FTENVQRYPT…GRRDTQVKIR (406 aa)) is adenylation (A) domain 1. Residues 816-892 (TEEEYKIQTL…DLVSNCKMSA (77 aa)) enclose the Carrier 1 domain. A thiolation (T) domain 1 region spans residues 821–889 (KIQTLKEIWS…QLSDLVSNCK (69 aa)). Serine 853 carries the O-(pantetheine 4'-phosphoryl)serine modification. Residues 926 to 1333 (EDVYPCTPLQ…AHVAEQIGQP (408 aa)) form a condensation (C) domain 1 region. Residues 1390-1768 (DGNLTFEELN…ISRATTQIKI (379 aa)) form an adenylation (A) domain 2 region. The Carrier 2 domain maps to 1902-1978 (IELSEKQENM…QLVMIATELT (77 aa)). Residues 1907–1975 (KQENMARLWA…RFDQLVMIAT (69 aa)) form a thiolation (T) domain 2 region. Serine 1939 carries the O-(pantetheine 4'-phosphoryl)serine modification. The condensation (C) domain 2 stretch occupies residues 2022-2438 (DIYACTPFQE…DLASEQDLAK (417 aa)). An adenylation (A) domain 3 region spans residues 2459–2859 (AEKARQHPNK…GRADTQVKLR (401 aa)). One can recognise a Carrier 3 domain in the interval 2976–3052 (GPLTEMETTL…GMAIKIQPIH (77 aa)). Residues 2977–3049 (PLTEMETTLA…NLAGMAIKIQ (73 aa)) are thiolation (T) domain 3. Serine 3013 bears the O-(pantetheine 4'-phosphoryl)serine mark. Residues 3089-3482 (DIYPCTPLQV…LETVLSAFST (394 aa)) are condensation (C) domain 3. An adenylation (A) domain 4 region spans residues 3523–3873 (VQRAPDKVAI…IARKDLQVKL (351 aa)). The region spanning 4005 to 4081 (IPSTPTEMKM…ELATKIAPRI (77 aa)) is the Carrier 4 domain. The tract at residues 4010-4078 (TEMKMQQLWA…RLSELATKIA (69 aa)) is thiolation (T) domain 4. The residue at position 4042 (serine 4042) is an O-(pantetheine 4'-phosphoryl)serine. The segment at 4123–4549 (KDVYPCTPLQ…QSLDSLSQQD (427 aa)) is condensation (C) domain 4. Residues 4574-4982 (QEIAGRHPDA…GRIGTDIKLR (409 aa)) are adenylation (A) domain 5. The Carrier 5 domain maps to 5118-5194 (PPSTQEEKVI…SLAEKISWES (77 aa)). A thiolation (T) domain 5 region spans residues 5123–5191 (EEKVIAALWA…KLASLAEKIS (69 aa)). Residue serine 5155 is modified to O-(pantetheine 4'-phosphoryl)serine. The tract at residues 5260-5556 (AYLDIGPDVQ…DKCTTCVSGS (297 aa)) is condensation (C) domain 5.

It belongs to the NRP synthetase family.

It functions in the pathway mycotoxin biosynthesis. In terms of biological role, nonribosomal peptide synthetase; part of the gene cluster that mediates the biosynthesis of the mycotoxin cyclochlorotine, a hepatotoxic and carcinogenic cyclic chlorinated pentapeptide. Within the pathway, The NRPS cctN initially catalyzes the condensation of L-serine (Ser), Pro, L-2-aminobutyrate (2Abu), Ser, and beta-Phe in this order. During the chain elongation, side-chain hydroxy group of Ser4 would be used as a nucleophile, giving isocyclotine as a product of terminal condensation-like (CT) domain-catalyzed cyclization. After the dichlorination of Pro2 catalyzed by cctP2 to produce isocyclochlorotine, the cctO-mediated transacylation of isocyclochlorotine can furnish cyclochlorotine. The subsequent hydroxylation of cyclochlorotine by cctR yields hydroxycyclochlorotine as the final product. CctP1 probably acts as a phenylalanine aminomutase and provides the uncommon building block beta-Phe. Furthermore, 2Abu can be synthesized from threonine by one of the threonine dehydratases and transaminases localized outside of the cluster. The functions of the remaining proteins encoded by the cluster, cctM and cctT, have not been identified yet. The protein is Cyclochlorotine synthetase of Talaromyces islandicus (Penicillium islandicum).